The following is a 376-amino-acid chain: Queuine tRNA-ribosyltransferase (376 aa).

D93 (proton acceptor) is an active-site residue. Residues 93–97 (DSGGF), D147, Q190, and G217 each bind substrate. The RNA binding stretch occupies residues 248 to 254 (GVGTPDD). The active-site Nucleophile is the D267. The tract at residues 272 to 276 (TRSGR) is RNA binding; important for wobble base 34 recognition.

Belongs to the queuine tRNA-ribosyltransferase family. As to quaternary structure, homodimer. Within each dimer, one monomer is responsible for RNA recognition and catalysis, while the other monomer binds to the replacement base PreQ1.

The enzyme catalyses 7-aminomethyl-7-carbaguanine + guanosine(34) in tRNA = 7-aminomethyl-7-carbaguanosine(34) in tRNA + guanine. It functions in the pathway tRNA modification; tRNA-queuosine biosynthesis. Catalyzes the base-exchange of a guanine (G) residue with the queuine precursor 7-aminomethyl-7-deazaguanine (PreQ1) at position 34 (anticodon wobble position) in tRNAs with GU(N) anticodons (tRNA-Asp, -Asn, -His and -Tyr). Catalysis occurs through a double-displacement mechanism. The nucleophile active site attacks the C1' of nucleotide 34 to detach the guanine base from the RNA, forming a covalent enzyme-RNA intermediate. The proton acceptor active site deprotonates the incoming PreQ1, allowing a nucleophilic attack on the C1' of the ribose to form the product. After dissociation, two additional enzymatic reactions on the tRNA convert PreQ1 to queuine (Q), resulting in the hypermodified nucleoside queuosine (7-(((4,5-cis-dihydroxy-2-cyclopenten-1-yl)amino)methyl)-7-deazaguanosine). This is Queuine tRNA-ribosyltransferase from Agrobacterium fabrum (strain C58 / ATCC 33970) (Agrobacterium tumefaciens (strain C58)).